Consider the following 132-residue polypeptide: Putative holo-[acyl-carrier-protein] synthase (132 aa).

Residues Asp-6 and Glu-67 each coordinate Mg(2+).

This sequence belongs to the P-Pant transferase superfamily. AcpS family.

The catalysed reaction is apo-[ACP] + CoA = holo-[ACP] + adenosine 3',5'-bisphosphate + H(+). Functionally, transfers the 4'-phosphopantetheine moiety from coenzyme A to a Ser of acyl-carrier-protein. This is Putative holo-[acyl-carrier-protein] synthase (new8) from Schizosaccharomyces pombe (strain 972 / ATCC 24843) (Fission yeast).